The following is a 159-amino-acid chain: Cyclic pyranopterin monophosphate synthase (159 aa).

Residues Leu-75–His-77 and Met-113–Glu-114 each bind substrate. Asp-128 is a catalytic residue.

This sequence belongs to the MoaC family. Homohexamer; trimer of dimers.

The enzyme catalyses (8S)-3',8-cyclo-7,8-dihydroguanosine 5'-triphosphate = cyclic pyranopterin phosphate + diphosphate. The protein operates within cofactor biosynthesis; molybdopterin biosynthesis. In terms of biological role, catalyzes the conversion of (8S)-3',8-cyclo-7,8-dihydroguanosine 5'-triphosphate to cyclic pyranopterin monophosphate (cPMP). The chain is Cyclic pyranopterin monophosphate synthase from Burkholderia multivorans (strain ATCC 17616 / 249).